We begin with the raw amino-acid sequence, 203 residues long: NAD(P)H dehydrogenase (quinone) (203 aa).

The Flavodoxin-like domain occupies 3–194 (VLIVYYSMYG…AGARFQGRYV (192 aa)). FMN is bound by residues 9-14 (SMYGHI) and 82-84 (TRF). NAD(+) is bound at residue Tyr11. Position 102 (Trp102) interacts with substrate. FMN-binding positions include 117–123 (SSATQHG) and His138.

The protein belongs to the WrbA family. Requires FMN as cofactor.

The catalysed reaction is a quinone + NADH + H(+) = a quinol + NAD(+). It catalyses the reaction a quinone + NADPH + H(+) = a quinol + NADP(+). In Geobacter sulfurreducens (strain ATCC 51573 / DSM 12127 / PCA), this protein is NAD(P)H dehydrogenase (quinone).